We begin with the raw amino-acid sequence, 253 residues long: MKTIDLNCDSGESFGAYKMGNDDEILPFVSSINVACGFHAGDPSVMRQTIEKAMQHNVAIGAHPGFPDLIGFGRRNMNVSASEVYDYVLYQIGALDGFVKVAGGKMHHVKPHGALYNMAATNPEIADAIAKAIYHINPSLLLYGLANSEAFIQAAVKYNITLVQEAFADRTYKQDGTLTSRTEENALIKNEEEAIKQVLQMVKEGYVSAVNGEKVAVQAQTICLHGDGEKALQFAKRIYRTFEHDGISICAPK.

It belongs to the LamB/PxpA family. In terms of assembly, forms a complex composed of PxpA, PxpB and PxpC.

It carries out the reaction 5-oxo-L-proline + ATP + 2 H2O = L-glutamate + ADP + phosphate + H(+). In terms of biological role, catalyzes the cleavage of 5-oxoproline to form L-glutamate coupled to the hydrolysis of ATP to ADP and inorganic phosphate. This is 5-oxoprolinase subunit A from Bacillus cereus (strain B4264).